The primary structure comprises 24 residues: Brevinin-1Bb (24 aa).

A disulfide bond links C18 and C24.

As to expression, expressed by the skin glands.

Its subcellular location is the secreted. Antibacterial activity against Gram-positive bacterium S.aureus and Gram-negative bacterium E.coli. Has activity against C.albicans. This Lithobates berlandieri (Rio Grande leopard frog) protein is Brevinin-1Bb.